The chain runs to 327 residues: Methionyl-tRNA formyltransferase (327 aa).

111-114 (SLLP) contacts (6S)-5,6,7,8-tetrahydrofolate.

This sequence belongs to the Fmt family.

It carries out the reaction L-methionyl-tRNA(fMet) + (6R)-10-formyltetrahydrofolate = N-formyl-L-methionyl-tRNA(fMet) + (6S)-5,6,7,8-tetrahydrofolate + H(+). Attaches a formyl group to the free amino group of methionyl-tRNA(fMet). The formyl group appears to play a dual role in the initiator identity of N-formylmethionyl-tRNA by promoting its recognition by IF2 and preventing the misappropriation of this tRNA by the elongation apparatus. This is Methionyl-tRNA formyltransferase from Synechococcus elongatus (strain ATCC 33912 / PCC 7942 / FACHB-805) (Anacystis nidulans R2).